Here is a 197-residue protein sequence, read N- to C-terminus: dITP/XTP pyrophosphatase (197 aa).

Residue 8-13 participates in substrate binding; it reads TGNAGK. Residues E40 and D69 each coordinate Mg(2+). D69 serves as the catalytic Proton acceptor. Substrate is bound by residues S70, 154 to 157, K177, and 182 to 183; these read FGYD and HR.

This sequence belongs to the HAM1 NTPase family. As to quaternary structure, homodimer. The cofactor is Mg(2+).

The catalysed reaction is XTP + H2O = XMP + diphosphate + H(+). It catalyses the reaction dITP + H2O = dIMP + diphosphate + H(+). It carries out the reaction ITP + H2O = IMP + diphosphate + H(+). Pyrophosphatase that catalyzes the hydrolysis of nucleoside triphosphates to their monophosphate derivatives, with a high preference for the non-canonical purine nucleotides XTP (xanthosine triphosphate), dITP (deoxyinosine triphosphate) and ITP. Seems to function as a house-cleaning enzyme that removes non-canonical purine nucleotides from the nucleotide pool, thus preventing their incorporation into DNA/RNA and avoiding chromosomal lesions. The polypeptide is dITP/XTP pyrophosphatase (rdgB) (Salmonella typhi).